A 599-amino-acid chain; its full sequence is Tryptophan 2-C-methyltransferase (599 aa).

Positions 4–149 (KGTVALINPN…RALAEGRSAD (146 aa)) constitute a B12-binding domain. Positions 167 to 197 (RVAPPALDPRAAPAPSSSPSPSPAPSSSSAP) are disordered. Low complexity predominate over residues 168–181 (VAPPALDPRAAPAP). The region spanning 239-492 (YREGGLGSIL…IEYERQFMFD (254 aa)) is the Radical SAM core domain. Residues Cys-253, Cys-257, and Cys-260 each contribute to the [4Fe-4S] cluster site.

The cofactor is [4Fe-4S] cluster. Requires cob(II)alamin as cofactor.

The enzyme catalyses L-tryptophan + S-adenosyl-L-methionine = 2-methyl-L-tryptophan + S-adenosyl-L-homocysteine + H(+). Its function is as follows. Involved in the biosynthetic pathway of the antibiotic thiostrepton A. First, TsrM catalyzes the transfer of a methyl group from S-adenosyl methionine (SAM) to cobalamin, leading to the formation of methylcobalamin (CH3-cobalamin) and S-adenosyl-L-homocysteine (SAH). Then the methyl group is transferred to the C2 position of tryptophan (Trp) with the concerted action of the radical SAM [4Fe-4S] center, leading to the production of methyltryptophan. The chain is Tryptophan 2-C-methyltransferase from Streptomyces laurentii.